We begin with the raw amino-acid sequence, 66 residues long: Sarcoplasmic/endoplasmic reticulum calcium ATPase regulator ARLN (66 aa).

Residue methionine 1 is modified to N-acetylmethionine. Residues 1-37 form a disordered region; that stretch reads MEVDAPGVDGRDGLRERRGFSEGGRQNFDVRPQSGAN. Over residues 9 to 20 the composition is skewed to basic and acidic residues; it reads DGRDGLRERRGF. A helical membrane pass occupies residues 45 to 65; sequence WLDLWLFILFDVVVFLFVYFL.

As to quaternary structure, homooligomer. Can also form heterooligomers with other sarcoplasmic/endoplasmic reticulum calcium ATPase (SERCA) regulators ERLN, PLN, SLN and STRIT1/DWORF. Monomer. Interacts as a monomer with ATP2A2/SERCA2; the interaction results in inhibition of ATP2A2 Ca(2+) affinity.

It localises to the endoplasmic reticulum membrane. In terms of biological role, inhibits the activity of the calcium ATPases ATP2A2/SERCA2 and ATP2A3/SERCA3 by decreasing their apparent affinity for Ca(2+). The protein is Sarcoplasmic/endoplasmic reticulum calcium ATPase regulator ARLN of Homo sapiens (Human).